The primary structure comprises 170 residues: Allophycocyanin subunit beta-18 (170 aa).

The residue at position 74 (N74) is an N4-methylasparagine. Residue C84 participates in (2R,3E)-phycocyanobilin binding.

It belongs to the phycobiliprotein family. As to quaternary structure, heterodimer of an alpha and a beta chain. In terms of processing, contains one covalently linked bilin chromophore.

Its subcellular location is the plastid. The protein localises to the chloroplast thylakoid membrane. Its function is as follows. Light-harvesting photosynthetic bile pigment-protein from the phycobiliprotein complex. Allophycocyanin has a maximum absorption at approximately 650 nanometers. This chain is Allophycocyanin subunit beta-18 (apcF), found in Cyanidium caldarium (Red alga).